A 611-amino-acid polypeptide reads, in one-letter code: Alpha-1,2-mannosyltransferase ALG9 (611 aa).

A compositionally biased stretch (basic residues) spans 1–10 (MASRRARQRL). The tract at residues 1 to 51 (MASRRARQRLKGGGGGGGGGGDAGPAAEKLEQLGSREAGAEPRPESGNKAG) is disordered. The Lumenal portion of the chain corresponds to 1–135 (MASRRARQRL…FHARILQTNK (135 aa)). Residues 11-23 (KGGGGGGGGGGDA) are compositionally biased toward gly residues. A glycan (N-linked (GlcNAc...) asparagine) is linked at Asn77. A helical transmembrane segment spans residues 136–156 (ILVFYFLRCLLAFVSCVCELY). At 157-171 (FYKAVCKKFGLHVSR) the chain is on the cytoplasmic side. The chain crosses the membrane as a helical span at residues 172 to 192 (MMLAFLVLSTGMFCSSSAFLP). The Lumenal segment spans residues 193-213 (SSFCMYTTLIAMTGWYMDKTP). A helical transmembrane segment spans residues 214–234 (IAVLGVAAGAILGWPFSAALG). At 235-249 (LPIAFDLLARKHRWK) the chain is on the cytoplasmic side. The helical transmembrane segment at 250 to 270 (SFLLWSLVALALFLVPVVVID) threads the bilayer. Residues 271 to 310 (SYYYGKLVVAPLNIVLYNVFTSHGPDLYGTEPWYFYLING) lie on the Lumenal side of the membrane. A helical membrane pass occupies residues 311–331 (FLNFNVAFALALLVLPLTFLM). At 332-342 (EYLLQRFHVQN) the chain is on the cytoplasmic side. Residues 343–363 (LGHPYWLTLAPMYIWFIIFFI) form a helical membrane-spanning segment. Over 364-370 (QPHKEER) the chain is Lumenal. The helical transmembrane segment at 371-391 (FLFPVYPLICLCGAVALSALQ) threads the bilayer. Residues 392–405 (KCYHFVFQRYRLEH) lie on the Cytoplasmic side of the membrane. The helical transmembrane segment at 406–426 (YTVTSNWLALGTVFLFGLLSF) threads the bilayer. Topologically, residues 427–611 (SRSVALFRGY…AKPSRKKSGG (185 aa)) are lumenal. N-linked (GlcNAc...) asparagine glycans are attached at residues Asn550 and Asn593.

It belongs to the glycosyltransferase 22 family.

It is found in the endoplasmic reticulum membrane. The enzyme catalyses an alpha-D-Man-(1-&gt;2)-alpha-D-Man-(1-&gt;2)-alpha-D-Man-(1-&gt;3)-[alpha-D-Man-(1-&gt;3)-alpha-D-Man-(1-&gt;6)]-beta-D-Man-(1-&gt;4)-beta-D-GlcNAc-(1-&gt;4)-alpha-D-GlcNAc-diphospho-di-trans,poly-cis-dolichol + a di-trans,poly-cis-dolichyl beta-D-mannosyl phosphate = an alpha-D-Man-(1-&gt;2)-alpha-D-Man-(1-&gt;2)-alpha-D-Man-(1-&gt;3)-[alpha-D-Man-(1-&gt;2)-alpha-D-Man-(1-&gt;3)-alpha-D-Man-(1-&gt;6)]-beta-D-Man-(1-&gt;4)-beta-D-GlcNAc-(1-&gt;4)-alpha-D-GlcNAc-diphospho-di-trans,poly-cis-dolichol + a di-trans,poly-cis-dolichyl phosphate + H(+). It catalyses the reaction an alpha-D-Man-(1-&gt;2)-alpha-D-Man-(1-&gt;2)-alpha-D-Man-(1-&gt;3)-[alpha-D-Man-(1-&gt;2)-alpha-D-Man-(1-&gt;3)-[alpha-D-Man-(1-&gt;6)]-alpha-D-Man-(1-&gt;6)]-beta-D-Man-(1-&gt;4)-beta-D-GlcNAc-(1-&gt;4)-alpha-D-GlcNAc-diphospho-di-trans,poly-cis-dolichol + a di-trans,poly-cis-dolichyl beta-D-mannosyl phosphate = an alpha-D-Man-(1-&gt;2)-alpha-D-Man-(1-&gt;2)-alpha-D-Man-(1-&gt;3)-[alpha-D-Man-(1-&gt;2)-alpha-D-Man-(1-&gt;3)-[alpha-D-Man-(1-&gt;2)-alpha-D-Man-(1-&gt;6)]-alpha-D-Man-(1-&gt;6)]-beta-D-Man-(1-&gt;4)-beta-D-GlcNAc-(1-&gt;4)-alpha-D-GlcNAc-diphospho-di-trans,poly-cis-dolichol + a di-trans,poly-cis-dolichyl phosphate + H(+). The protein operates within protein modification; protein glycosylation. In terms of biological role, mannosyltransferase that operates in the biosynthetic pathway of dolichol-linked oligosaccharides, the glycan precursors employed in protein asparagine (N)-glycosylation. The assembly of dolichol-linked oligosaccharides begins on the cytosolic side of the endoplasmic reticulum membrane and finishes in its lumen. The sequential addition of sugars to dolichol pyrophosphate produces dolichol-linked oligosaccharides containing fourteen sugars, including two GlcNAcs, nine mannoses and three glucoses. Once assembled, the oligosaccharide is transferred from the lipid to nascent proteins by oligosaccharyltransferases. In the lumen of the endoplasmic reticulum, catalyzes the addition of the seventh and ninth alpha-1,2-linked mannose residues to Man(6)GlcNAc(2)-PP-dolichol and Man(8)GlcNAc(2)-PP-dolichol respectively. In Mus musculus (Mouse), this protein is Alpha-1,2-mannosyltransferase ALG9.